The chain runs to 561 residues: Potassium-transporting ATPase potassium-binding subunit (561 aa).

Transmembrane regions (helical) follow at residues 5-25 (IELF…GTYM), 63-83 (KYAL…YFIL), 103-122 (LAFN…HYAG), 133-153 (IVIV…AAAI), 179-199 (LLPI…PQTF), 255-275 (IEML…GLMI), 281-301 (ALVL…GAVY), 380-400 (AGLQ…GLMV), 418-438 (LIAL…ALTV), 485-505 (IMTG…MLAV), and 531-551 (AIFI…AVIL).

The protein belongs to the KdpA family. As to quaternary structure, the system is composed of three essential subunits: KdpA, KdpB and KdpC.

The protein resides in the cell membrane. In terms of biological role, part of the high-affinity ATP-driven potassium transport (or Kdp) system, which catalyzes the hydrolysis of ATP coupled with the electrogenic transport of potassium into the cytoplasm. This subunit binds the extracellular potassium ions and delivers the ions to the membrane domain of KdpB through an intramembrane tunnel. The sequence is that of Potassium-transporting ATPase potassium-binding subunit from Caldanaerobacter subterraneus subsp. tengcongensis (strain DSM 15242 / JCM 11007 / NBRC 100824 / MB4) (Thermoanaerobacter tengcongensis).